Here is a 335-residue protein sequence, read N- to C-terminus: Mevalonate kinase (335 aa).

111 to 121 (PVGAGLGSSAA) lines the ATP pocket. The active-site Proton acceptor is the Asp162.

The protein belongs to the GHMP kinase family. Mevalonate kinase subfamily. In terms of assembly, homodimer. Requires Mg(2+) as cofactor.

Its subcellular location is the cytoplasm. The enzyme catalyses (R)-mevalonate + ATP = (R)-5-phosphomevalonate + ADP + H(+). Its pathway is isoprenoid biosynthesis; isopentenyl diphosphate biosynthesis via mevalonate pathway; isopentenyl diphosphate from (R)-mevalonate: step 1/3. Functionally, catalyzes the phosphorylation of (R)-mevalonate (MVA) to (R)-mevalonate 5-phosphate (MVAP). Functions in the mevalonate (MVA) pathway leading to isopentenyl diphosphate (IPP), a key precursor for the biosynthesis of isoprenoid compounds such as archaeal membrane lipids. This is Mevalonate kinase from Pyrococcus abyssi (strain GE5 / Orsay).